The sequence spans 282 residues: Transcription factor MYB1 (282 aa).

2 consecutive HTH myb-type domains span residues 9 to 61 (KEGL…LNYL) and 62 to 116 (RPDI…SKKV). DNA-binding regions (H-T-H motif) lie at residues 37–61 (WRDL…LNYL) and 89–112 (WSLI…NTYL). The segment at 258–282 (EDDWKQNGGKDELMGGGNGGPSSVS) is disordered. The segment covering 260–270 (DWKQNGGKDEL) has biased composition (basic and acidic residues). The segment covering 271-282 (MGGGNGGPSSVS) has biased composition (gly residues).

It is found in the nucleus. Its function is as follows. Transcription activator involved in the spatiotemporal regulation of flavonoid biosynthesis specifically in the corms of Montbretia. Activates the promoters of enzymes involved in the biosynthesis of the flavonol kaempferol and the flavonol-glycoside kaempferol-rhamnoside. The sequence is that of Transcription factor MYB1 from Crocosmia x crocosmiiflora (Montbretia).